Here is a 483-residue protein sequence, read N- to C-terminus: UDP-N-acetylmuramoyl-L-alanyl-D-glutamate--2,6-diaminopimelate ligase 2 (483 aa).

Ser30 provides a ligand contact to UDP-N-acetyl-alpha-D-muramoyl-L-alanyl-D-glutamate. Residue 111 to 117 (GTNGKTT) participates in ATP binding. Residues 156–157 (TT), Thr183, and Arg191 each bind UDP-N-acetyl-alpha-D-muramoyl-L-alanyl-D-glutamate. At Lys223 the chain carries N6-carboxylysine. Residues Arg380, 404 to 407 (DNPR), Gly456, and Glu460 each bind meso-2,6-diaminopimelate. A Meso-diaminopimelate recognition motif motif is present at residues 404–407 (DNPR).

It belongs to the MurCDEF family. MurE subfamily. The cofactor is Mg(2+). In terms of processing, carboxylation is probably crucial for Mg(2+) binding and, consequently, for the gamma-phosphate positioning of ATP.

The protein resides in the cytoplasm. The catalysed reaction is UDP-N-acetyl-alpha-D-muramoyl-L-alanyl-D-glutamate + meso-2,6-diaminopimelate + ATP = UDP-N-acetyl-alpha-D-muramoyl-L-alanyl-gamma-D-glutamyl-meso-2,6-diaminopimelate + ADP + phosphate + H(+). Its pathway is cell wall biogenesis; peptidoglycan biosynthesis. Its function is as follows. Catalyzes the addition of meso-diaminopimelic acid to the nucleotide precursor UDP-N-acetylmuramoyl-L-alanyl-D-glutamate (UMAG) in the biosynthesis of bacterial cell-wall peptidoglycan. The polypeptide is UDP-N-acetylmuramoyl-L-alanyl-D-glutamate--2,6-diaminopimelate ligase 2 (Clostridium acetobutylicum (strain ATCC 824 / DSM 792 / JCM 1419 / IAM 19013 / LMG 5710 / NBRC 13948 / NRRL B-527 / VKM B-1787 / 2291 / W)).